Consider the following 342-residue polypeptide: DNA primase small subunit PriS (342 aa).

Catalysis depends on residues aspartate 97, aspartate 99, and aspartate 236.

It belongs to the eukaryotic-type primase small subunit family. Heterodimer of a small subunit (PriS) and a large subunit (PriL). Mg(2+) is required as a cofactor. It depends on Mn(2+) as a cofactor.

Its function is as follows. Catalytic subunit of DNA primase, an RNA polymerase that catalyzes the synthesis of short RNA molecules used as primers for DNA polymerase during DNA replication. The small subunit contains the primase catalytic core and has DNA synthesis activity on its own. Binding to the large subunit stabilizes and modulates the activity, increasing the rate of DNA synthesis while decreasing the length of the DNA fragments, and conferring RNA synthesis capability. The DNA polymerase activity may enable DNA primase to also catalyze primer extension after primer synthesis. May also play a role in DNA repair. In Aeropyrum pernix (strain ATCC 700893 / DSM 11879 / JCM 9820 / NBRC 100138 / K1), this protein is DNA primase small subunit PriS.